The primary structure comprises 518 residues: UPF0053 inner membrane protein YoaE (518 aa).

Residues 1–13 (MEFLMDPSIWAGL) are Cytoplasmic-facing. The chain crosses the membrane as a helical span at residues 14 to 34 (LTLVVLEIVLGIDNLVFIAIL). The Periplasmic segment spans residues 35 to 48 (ADKLPPKQRDKARL). The helical transmembrane segment at 49-69 (LGLSLALIMRLGLLSLISWMV) threads the bilayer. Residues 70-78 (TLTKPLFTV) are Cytoplasmic-facing. Residues 79–99 (MDFSFSGRDLIMLFGGIFLLF) form a helical membrane-spanning segment. At 100-124 (KATTELHERLENRDHDSGHGKGYAS) the chain is on the periplasmic side. A helical transmembrane segment spans residues 125-145 (FWVVVTQIVILDAVFSLDAVI). Residues 146–149 (TAVG) are Cytoplasmic-facing. Residues 150–170 (MVNHLPVMMAAVVIAMAVMLL) form a helical membrane-spanning segment. The Periplasmic segment spans residues 171–184 (ASKPLTRFVNQHPT). Residues 185–205 (VVVLCLSFLLMIGLSLVAEGF) traverse the membrane as a helical segment. Gly-206 is a topological domain (cytoplasmic). Residues 207–227 (FHIPKGYLYAAIGFSIIIEVF) traverse the membrane as a helical segment. Residues 228–354 (NQIARRNFIR…IGIVRAKELL (127 aa)) lie on the Periplasmic side of the membrane. CBS domains follow at residues 304-363 (MTPR…GVDV) and 367-427 (ASAS…DADE). A helical membrane pass occupies residues 355–375 (VALEEGVDVAAIASASPAIIV). Topologically, residues 376-518 (PETLDPINLL…KEQPAHDEDE (143 aa)) are cytoplasmic.

The protein belongs to the UPF0053 family.

The protein localises to the cell inner membrane. The protein is UPF0053 inner membrane protein YoaE (yoaE) of Escherichia coli O157:H7.